The chain runs to 400 residues: Bifunctional arginine demethylase and lysyl-hydroxylase psr-1 (400 aa).

The JmjC domain occupies 146 to 310 (RKTKKLSEDY…LVWPKTVKGR (165 aa)). Thr-189 lines the substrate pocket. The Fe cation site is built by His-192 and Asp-194. Asn-202 contributes to the 2-oxoglutarate binding site. Substrate is bound at residue Lys-209. His-278 lines the Fe cation pocket. Thr-290 contributes to the 2-oxoglutarate binding site. A disordered region spans residues 342-400 (DMNESSSDSSSSSSSSDDSSDESDCDDSGRCGGRKRKNDDRSNECPEKMSTTYFQNSLV). Over residues 346 to 358 (SSSDSSSSSSSSD) the composition is skewed to low complexity. Residues 378–388 (KNDDRSNECPE) are compositionally biased toward basic and acidic residues. Positions 390-400 (MSTTYFQNSLV) are enriched in polar residues.

The protein belongs to the JMJD6 family. As to quaternary structure, interacts with ced-5 and ced-12. The cofactor is Fe(2+).

The protein resides in the nucleus. In terms of biological role, dioxygenase that can both act as a histone arginine demethylase and a lysyl-hydroxylase. This Caenorhabditis elegans protein is Bifunctional arginine demethylase and lysyl-hydroxylase psr-1 (psr-1).